The primary structure comprises 432 residues: Adenylosuccinate synthetase (432 aa).

GTP-binding positions include glycine 12–lysine 18 and glycine 40–threonine 42. The active-site Proton acceptor is aspartate 13. Mg(2+)-binding residues include aspartate 13 and glycine 40. IMP contacts are provided by residues aspartate 13–lysine 16, asparagine 38–histidine 41, threonine 132, arginine 146, glutamine 226, threonine 241, and arginine 305. Histidine 41 serves as the catalytic Proton donor. Threonine 301–arginine 307 contributes to the substrate binding site. Residues arginine 307, lysine 333 to aspartate 335, and serine 415 to serine 417 each bind GTP.

The protein belongs to the adenylosuccinate synthetase family. As to quaternary structure, homodimer. Mg(2+) serves as cofactor.

The protein localises to the cytoplasm. The catalysed reaction is IMP + L-aspartate + GTP = N(6)-(1,2-dicarboxyethyl)-AMP + GDP + phosphate + 2 H(+). It participates in purine metabolism; AMP biosynthesis via de novo pathway; AMP from IMP: step 1/2. Functionally, plays an important role in the de novo pathway of purine nucleotide biosynthesis. Catalyzes the first committed step in the biosynthesis of AMP from IMP. The sequence is that of Adenylosuccinate synthetase from Sinorhizobium fredii (strain NBRC 101917 / NGR234).